We begin with the raw amino-acid sequence, 121 residues long: Large ribosomal subunit protein bL12 (121 aa).

The protein belongs to the bacterial ribosomal protein bL12 family. In terms of assembly, homodimer. Part of the ribosomal stalk of the 50S ribosomal subunit. Forms a multimeric L10(L12)X complex, where L10 forms an elongated spine to which 2 to 4 L12 dimers bind in a sequential fashion. Binds GTP-bound translation factors.

Functionally, forms part of the ribosomal stalk which helps the ribosome interact with GTP-bound translation factors. Is thus essential for accurate translation. The sequence is that of Large ribosomal subunit protein bL12 from Limosilactobacillus reuteri (strain DSM 20016) (Lactobacillus reuteri).